The sequence spans 523 residues: Excitatory amino acid transporter 3 (523 aa).

Topologically, residues 1–18 (MGKPTSSGCDWRRFLRNH) are cytoplasmic. A helical membrane pass occupies residues 19–38 (WLLLSTVAAVVLGIVLGVVV). The Extracellular portion of the chain corresponds to 39–61 (RGHSELSNLDKFYFAFPGEILMR). A helical transmembrane segment spans residues 62 to 82 (MLKLVILPLIVSSMITGVAAL). The Cytoplasmic portion of the chain corresponds to 83 to 93 (DSNVSGKIGLR). Residues 94 to 114 (AVVYYFSTTVIAVILGIVLVV) form a helical membrane-spanning segment. Residues Tyr-98, Thr-101, and Thr-102 each coordinate Na(+). Residues 115 to 204 (SIKPGVTQKV…KTKEYKIVGL (90 aa)) are Extracellular-facing. N-linked (GlcNAc...) asparagine glycans are attached at residues Asn-128, Asn-178, and Asn-194. Residues 205 to 228 (YSDGINVLGLIIFCLVFGLVIGKM) form a helical membrane-spanning segment. The Cytoplasmic portion of the chain corresponds to 229-237 (GEKGQILVD). Residues 238 to 265 (FFNALSDATMKIVQIIMCYMPIGILFLI) traverse the membrane as a helical segment. Residues 266-285 (AGKIIEVEDWEIFRKLGLYM) are Extracellular-facing. The chain crosses the membrane as a helical span at residues 286–307 (ATVLSGLAIHSLIVLPLLYFIV). The Cytoplasmic portion of the chain corresponds to 308–312 (VRKNP). Residues 313 to 343 (FRFALGMAQALLTALMISSSSATLPVTFRCA) constitute an intramembrane region (discontinuously helical). Residues Ser-330 and Ser-332 each contribute to the L-aspartate site. The Cytoplasmic portion of the chain corresponds to 344–352 (EEKNQVDKR). The helical transmembrane segment at 353-379 (ITRFVLPVGATINMDGTALYEAVAAVF) threads the bilayer. Na(+) contacts are provided by Gly-361, Thr-363, Asn-365, and Asp-367. Residue Thr-369 participates in L-aspartate binding. Over 380-392 (IAQLNGLDLSIGQ) the chain is Extracellular. Positions 393 to 426 (IVTISITATAASIGAAGVPQAGLVTMVIVLSAVG) form an intramembrane region, discontinuously helical. 3 residues coordinate Na(+): Ser-404, Ile-405, and Ala-407. Residue Val-410 coordinates L-aspartate. Topologically, residues 427–439 (LPAEDVTLIIAVD) are extracellular. A helical transmembrane segment spans residues 440-461 (WLLDRFRTMVNVLGDAFGTGIV). Residues Arg-446, Thr-447, and Asn-450 each contribute to the L-aspartate site. The Na(+) site is built by Asn-450 and Asp-454. Topologically, residues 462 to 523 (EKLSKKELEQ…TISFTQTSQF (62 aa)) are cytoplasmic. Phosphoserine is present on residues Ser-516 and Ser-521.

It belongs to the dicarboxylate/amino acid:cation symporter (DAACS) (TC 2.A.23) family. SLC1A1 subfamily. In terms of assembly, homotrimer. Interacts with ARL6IP5. Interacts with RTN2 (via N-terminus); the interaction promotes cell surface expression of SLC1A1. Interacts with SORCS2; this interaction is important for normal expression at the cell membrane. As to expression, detected on neurons in the brain cortex, dentate gyrus and hippocampus CA2 region (at protein level). Expressed in whole brain, brain cortex, hippocampus, cerebellum, lung, kidney, small intestine and skeletal muscle. Expressed in the renal outer medulla, medullary ray and cortex (at protein level).

The protein resides in the cell membrane. The protein localises to the apical cell membrane. Its subcellular location is the synapse. It localises to the synaptosome. It is found in the early endosome membrane. The protein resides in the late endosome membrane. The protein localises to the recycling endosome membrane. The enzyme catalyses K(+)(in) + L-glutamate(out) + 3 Na(+)(out) + H(+)(out) = K(+)(out) + L-glutamate(in) + 3 Na(+)(in) + H(+)(in). It catalyses the reaction K(+)(in) + L-aspartate(out) + 3 Na(+)(out) + H(+)(out) = K(+)(out) + L-aspartate(in) + 3 Na(+)(in) + H(+)(in). It carries out the reaction D-aspartate(out) + K(+)(in) + 3 Na(+)(out) + H(+)(out) = D-aspartate(in) + K(+)(out) + 3 Na(+)(in) + H(+)(in). The catalysed reaction is K(+)(in) + L-cysteine(out) + 3 Na(+)(out) + H(+)(out) = K(+)(out) + L-cysteine(in) + 3 Na(+)(in) + H(+)(in). Functionally, sodium-dependent, high-affinity amino acid transporter that mediates the uptake of L-glutamate and also L-aspartate and D-aspartate. Can also transport L-cysteine. Functions as a symporter that transports one amino acid molecule together with two or three Na(+) ions and one proton, in parallel with the counter-transport of one K(+) ion. Mediates Cl(-) flux that is not coupled to amino acid transport; this avoids the accumulation of negative charges due to aspartate and Na(+) symport. Plays an important role in L-glutamate and L-aspartate reabsorption in renal tubuli. Plays a redundant role in the rapid removal of released glutamate from the synaptic cleft, which is essential for terminating the postsynaptic action of glutamate. Contributes to glutathione biosynthesis and protection against oxidative stress via its role in L-glutamate and L-cysteine transport. Negatively regulated by ARL6IP5. This Mus musculus (Mouse) protein is Excitatory amino acid transporter 3 (Slc1a1).